Consider the following 1796-residue polypeptide: MKVSDRRKFEKANFDEFESALNNKNDLVHCPSITLFESIPTEVRSFYEDEKSGLIKVVKFRTGAMDRKRSFEKIVISVMVGKNVQKFLTFVEDEPDFQGGPIPSKYLIPKKINLMVYTLFQVHTLKFNRKDYDTLSLFYLNRGYYNELSFRVLERCHEIASARPNDSSTMRTFTDFVSGAPIVRSLQKSTIRKYGYNLAPYMFLLLHVDELSIFSAYQASLPGEKKVDTERLKRDLCPRKPIEIKYFSQICNDMMNKKDRLGDILHIILRACALNFGAGPRGGAGDEEDRSITNEEPIIPSVDEHGLKVCKLRSPNTPRRLRKTLDAVKALLVSSCACTARDLDIFDDTNGVAMWKWIKILYHEVAQETTLKDSYRITLVPSSDGISVCGKLFNREYVRGFYFACKAQFDNLWGELNNCFYMPTVVDIASLILRNREVLFREPKRGIDEYLENDSFLQMIPVKYREIVLPKLRRDTNKMTAALKNKVTVAIDELTVPLMWMVHFAVGYPYRYPELQLLAFAGPQRNVYVDDTTRRIQLYTDYNKNGSSEPRLKTLDGLTSDYVFYFVTVLRQMQICALGNSYDAFNHDPWMDVVGFEDPDQVTNRDISRIVLYSYMFLNTAKGCLVEYATFRQYMRELPKNAPQKLNFREMRQGLIALGRHCVGSRFETDLYESATSELMANHSVQTGRNIYGVDSFSLTSVSGTTATLLQERASERWIQWLGLESDYHCSFSSTRNAEDVVAGEAASSDHDQKISRVTRKRPREPKSTNDILVAGQKLFGSSFEFRDLHQLRLCHEIYMADTPSVAVQAPPGYGKTELFHLPLIALASKGDVKYVSFLFVPYTVLLANCMIRLSRCGCLNVAPVRNFIEEGCDGVTDLYVGIYDDLASTNFTDRIAAWENIVECTFRTNNVKLGYLIVDEFHNFETEVYRQSQFGGITNLDFDAFEKAIFLSGTAPEAVADAALQRIGLTGLAKKSMDINELKRSEDLSRGLSSYPTRMFNLIKEKSEVPLGHVHKIWKKVESQPEEALKLLLALFEIEPESKAIVVASTTNEVEELACSWRKYFRVVWIHGKLGAAEKVSRTKEFVTDGSMRVLIGTKLVTEGIDIKQLMMVIMLDNRLNIIELIQGVGRLRDGGLCYLLSRKNSWAARNRKGELPPIKEGCITEQVREFYGLESKKGKKGQHVGCCGSRTDLSADTVELIERMDRLAEKQATASMSIIALPSSFQESNSSDRCRKYCSSDEDSDTCIHGSANASTNATTNSSTNATTTASTNVRTSATTTASINVRTSAITTESTNSSTNATTTASTNVRTSATTTASINVRTSATTTESTNSNTSATTTESTDSNTSATTTESTDSNTSATTTASTNSSTNATTTASTNSSTNATTTESTNASAKEDANKDGNAEDNRFHPVTDINKESYKRKGSQMVLLERKKLKAQFPNTSENMNVLQFLGFRSDEIKHLFLYGIDVYFCPEGVFTQYGLCKGCQKMFELCVCWAGQKVSYRRMAWEALAVERMLRNDEEYKEYLEDIEPYHGDPVGYLKYFSVKRGEIYSQIQRNYAWYLAITRRRETISVLDSTRGKQGSQVFRMSGRQIKELYYKVWSNLRESKTEVLQYFLNWDEKKCREEWEAKDDTVFVEALEKVGVFQRLRSMTSAGLQGPQYVKLQFSRHHRQLRSRYELSLGMHLRDQLALGVTPSKVPHWTAFLSMLIGLFYNKTFRQKLEYLLEQISEVWLLPHWLDLANVEVLAADNTRVPLYMLMVAVHKELDSDDVPDGRFDIILLCRDSSREVGE.

Residues 743–767 (AGEAASSDHDQKISRVTRKRPREPK) are disordered. Residues 797–974 (EIYMADTPSV…LQRIGLTGLA (178 aa)) form the Helicase ATP-binding domain. Position 810-817 (810-817 (APPGYGKT)) interacts with ATP. The Helicase C-terminal domain occupies 1031 to 1180 (KLLLALFEIE…EFYGLESKKG (150 aa)). Disordered stretches follow at residues 1254 to 1278 (ANASTNATTNSSTNATTTASTNVRT) and 1294 to 1421 (TTES…DINK). A compositionally biased stretch (low complexity) spans 1294–1397 (TTESTNSSTN…ATTTESTNAS (104 aa)). Positions 1398–1421 (AKEDANKDGNAEDNRFHPVTDINK) are enriched in basic and acidic residues.

It belongs to the helicase family. Yeast subtelomeric Y' repeat subfamily.

Catalyzes DNA unwinding and is involved in telomerase-independent telomere maintenance. In Saccharomyces cerevisiae (strain ATCC 204508 / S288c) (Baker's yeast), this protein is Y' element ATP-dependent helicase protein 1 copy 5 (YRF1-5).